A 680-amino-acid chain; its full sequence is Structure-specific endonuclease subunit SLX4 (680 aa).

Disordered stretches follow at residues Glu15–Val92, Glu141–Gln183, and Leu450–Leu490. The segment covering Asp22–Leu33 has biased composition (acidic residues). Positions Asn60–Asn86 are enriched in basic and acidic residues. The segment covering Leu156–Lys174 has biased composition (basic residues). Residues Thr473–Leu490 are compositionally biased toward polar residues.

The protein belongs to the SLX4 family. In terms of assembly, forms a heterodimer with SLX1. Post-translationally, phosphorylated in response to DNA damage.

The protein localises to the nucleus. Regulatory subunit of the SLX1-SLX4 structure-specific endonuclease that resolves DNA secondary structures generated during DNA repair and recombination. Has endonuclease activity towards branched DNA substrates, introducing single-strand cuts in duplex DNA close to junctions with ss-DNA. The polypeptide is Structure-specific endonuclease subunit SLX4 (Vanderwaltozyma polyspora (strain ATCC 22028 / DSM 70294 / BCRC 21397 / CBS 2163 / NBRC 10782 / NRRL Y-8283 / UCD 57-17) (Kluyveromyces polysporus)).